The chain runs to 262 residues: Ribosomal RNA small subunit methyltransferase A (262 aa).

Residues H16, L18, G43, E64, D89, and N109 each contribute to the S-adenosyl-L-methionine site.

It belongs to the class I-like SAM-binding methyltransferase superfamily. rRNA adenine N(6)-methyltransferase family. RsmA subfamily.

It localises to the cytoplasm. The catalysed reaction is adenosine(1518)/adenosine(1519) in 16S rRNA + 4 S-adenosyl-L-methionine = N(6)-dimethyladenosine(1518)/N(6)-dimethyladenosine(1519) in 16S rRNA + 4 S-adenosyl-L-homocysteine + 4 H(+). In terms of biological role, specifically dimethylates two adjacent adenosines (A1518 and A1519) in the loop of a conserved hairpin near the 3'-end of 16S rRNA in the 30S particle. May play a critical role in biogenesis of 30S subunits. The sequence is that of Ribosomal RNA small subunit methyltransferase A from Xanthomonas euvesicatoria pv. vesicatoria (strain 85-10) (Xanthomonas campestris pv. vesicatoria).